Reading from the N-terminus, the 115-residue chain is Photosystem II reaction center Psb28 protein (115 aa).

Belongs to the Psb28 family. As to quaternary structure, part of the photosystem II complex.

The protein resides in the plastid. It localises to the chloroplast thylakoid membrane. The chain is Photosystem II reaction center Psb28 protein from Phaeodactylum tricornutum (strain CCAP 1055/1).